The following is a 331-amino-acid chain: Biotin synthase (331 aa).

A Radical SAM core domain is found at 52–277 (PDVEVEGIIS…RTMLRFAGGR (226 aa)). [4Fe-4S] cluster-binding residues include Cys-67, Cys-71, and Cys-74. [2Fe-2S] cluster-binding residues include Cys-110, Cys-143, Cys-202, and Arg-272.

The protein belongs to the radical SAM superfamily. Biotin synthase family. In terms of assembly, homodimer. It depends on [4Fe-4S] cluster as a cofactor. The cofactor is [2Fe-2S] cluster.

The catalysed reaction is (4R,5S)-dethiobiotin + (sulfur carrier)-SH + 2 reduced [2Fe-2S]-[ferredoxin] + 2 S-adenosyl-L-methionine = (sulfur carrier)-H + biotin + 2 5'-deoxyadenosine + 2 L-methionine + 2 oxidized [2Fe-2S]-[ferredoxin]. It functions in the pathway cofactor biosynthesis; biotin biosynthesis; biotin from 7,8-diaminononanoate: step 2/2. Functionally, catalyzes the conversion of dethiobiotin (DTB) to biotin by the insertion of a sulfur atom into dethiobiotin via a radical-based mechanism. In Mycolicibacterium gilvum (strain PYR-GCK) (Mycobacterium gilvum (strain PYR-GCK)), this protein is Biotin synthase.